The primary structure comprises 172 residues: Crossover junction endodeoxyribonuclease RuvC (172 aa).

Residues D8, E67, and D139 contribute to the active site. Mg(2+)-binding residues include D8, E67, and D139.

It belongs to the RuvC family. Homodimer which binds Holliday junction (HJ) DNA. The HJ becomes 2-fold symmetrical on binding to RuvC with unstacked arms; it has a different conformation from HJ DNA in complex with RuvA. In the full resolvosome a probable DNA-RuvA(4)-RuvB(12)-RuvC(2) complex forms which resolves the HJ. Mg(2+) serves as cofactor.

The protein resides in the cytoplasm. The enzyme catalyses Endonucleolytic cleavage at a junction such as a reciprocal single-stranded crossover between two homologous DNA duplexes (Holliday junction).. The RuvA-RuvB-RuvC complex processes Holliday junction (HJ) DNA during genetic recombination and DNA repair. Endonuclease that resolves HJ intermediates. Cleaves cruciform DNA by making single-stranded nicks across the HJ at symmetrical positions within the homologous arms, yielding a 5'-phosphate and a 3'-hydroxyl group; requires a central core of homology in the junction. The consensus cleavage sequence is 5'-(A/T)TT(C/G)-3'. Cleavage occurs on the 3'-side of the TT dinucleotide at the point of strand exchange. HJ branch migration catalyzed by RuvA-RuvB allows RuvC to scan DNA until it finds its consensus sequence, where it cleaves and resolves the cruciform DNA. The sequence is that of Crossover junction endodeoxyribonuclease RuvC from Hahella chejuensis (strain KCTC 2396).